Consider the following 562-residue polypeptide: Glucocorticoid modulatory element-binding protein 1 (562 aa).

Residue Ala2 is modified to N-acetylalanine. Residues 72-156 form the SAND domain; the sequence is ASSIEGNEDM…RKMMDSGQID (85 aa). Residue Cys103 participates in Zn(2+) binding. Residues Lys129, Lys133, Lys136, and Arg147 each contribute to the DNA site. Residues His160, Cys164, and Cys168 each coordinate Zn(2+). The stretch at 311-355 forms a coiled coil; the sequence is LDNRRKQVEQGEEQFLYTLADLERQLEEQKKQAQDPRLKSQTVQN. Residues 360 to 384 form a disordered region; the sequence is PVSTPKPPKRPRLQRPASTTVLSPS. Residues 375 to 384 show a composition bias toward polar residues; it reads PASTTVLSPS.

As to quaternary structure, homodimer, and heterodimer of GMEB1 and GMEB2. Interacts with TRIM63. Interacts with the glucocorticoid receptor (NR3C1) and NCOA2/TIF2. May interact with HSP27 and CREB-binding protein (CBP). Ubiquitous. Low levels were detected in heart, brain, spleen, lung, liver, skeletal muscle, kidney and testis.

The protein resides in the nucleus. It is found in the cytoplasm. In terms of biological role, trans-acting factor that binds to glucocorticoid modulatory elements (GME) present in the TAT (tyrosine aminotransferase) promoter and increases sensitivity to low concentrations of glucocorticoids. Also binds to the transferrin receptor promoter. This Mus musculus (Mouse) protein is Glucocorticoid modulatory element-binding protein 1 (Gmeb1).